A 1374-amino-acid polypeptide reads, in one-letter code: DNA-directed RNA polymerase subunit beta (1374 aa).

It belongs to the RNA polymerase beta chain family. As to quaternary structure, the RNAP catalytic core consists of 2 alpha, 1 beta, 1 beta' and 1 omega subunit. When a sigma factor is associated with the core the holoenzyme is formed, which can initiate transcription.

The enzyme catalyses RNA(n) + a ribonucleoside 5'-triphosphate = RNA(n+1) + diphosphate. In terms of biological role, DNA-dependent RNA polymerase catalyzes the transcription of DNA into RNA using the four ribonucleoside triphosphates as substrates. The chain is DNA-directed RNA polymerase subunit beta from Methylobacterium nodulans (strain LMG 21967 / CNCM I-2342 / ORS 2060).